The following is a 123-amino-acid chain: T-complex protein 1 subunit alpha (123 aa).

G68 serves as a coordination point for ADP.

The protein belongs to the TCP-1 chaperonin family. In terms of assembly, component of the chaperonin-containing T-complex (TRiC), a hexadecamer composed of two identical back-to-back stacked rings enclosing a protein folding chamber. Each ring is made up of eight different subunits: TCP1/CCT1, CCT2, CCT3, CCT4, CCT5, CCT6A/CCT6, CCT7, CCT8. Interacts with PACRG. Interacts with GBA1. Interacts with DLEC1.

Its subcellular location is the cytoplasm. The protein resides in the cytosol. The protein localises to the cytoskeleton. It is found in the microtubule organizing center. It localises to the centrosome. The enzyme catalyses ATP + H2O = ADP + phosphate + H(+). In terms of biological role, component of the chaperonin-containing T-complex (TRiC), a molecular chaperone complex that assists the folding of actin, tubulin and other proteins upon ATP hydrolysis. The TRiC complex mediates the folding of WRAP53/TCAB1, thereby regulating telomere maintenance. As part of the TRiC complex may play a role in the assembly of BBSome, a complex involved in ciliogenesis regulating transports vesicles to the cilia. This chain is T-complex protein 1 subunit alpha, found in Mesocricetus auratus (Golden hamster).